The sequence spans 378 residues: AA13 family lytic polysaccharide monooxygenase A (378 aa).

The N-terminal stretch at 1–17 (MKWSVIQALALASGVQA) is a signal peptide. His18 is a Cu(2+) binding site. A Methylhistidine modification is found at His18. The Chitin-binding type-4 domain occupies 18–244 (HGYLTFPMSR…PQIYLTCADI (227 aa)). 7 disulfides stabilise this stretch: Cys39–Cys42, Cys65–Cys241, Cys101–Cys199, Cys117–Cys144, Cys152–Cys160, Cys166–Cys172, and Cys180–Cys188. His108 contacts Cu(2+). Residue Asn221 is glycosylated (N-linked (GlcNAc...) asparagine). A Cu(2+)-binding site is contributed by Tyr238. A compositionally biased stretch (low complexity) spans 250 to 263 (DSQSPPTTTTTSTP). A disordered region spans residues 250–272 (DSQSPPTTTTTSTPASPPPTSCA). One can recognise a CBM20 domain in the interval 272–378 (ATPAASVAVT…GTATVDTAWK (107 aa)).

It belongs to the polysaccharide monooxygenase AA13 family. Cu(2+) is required as a cofactor. O-mannosylated.

The protein resides in the secreted. The enzyme catalyses starch + reduced acceptor + O2 = D-glucono-1,5-lactone-terminated malto-oligosaccharides + short-chain malto-oligosaccharides + acceptor + H2O.. With respect to regulation, activity is inhibited by both beta-cyclodextrin or amylose that block the access to the active site. In terms of biological role, starch-active lytic polysaccharide monooxygenase that oxidizes the C1 position of starch substrates. Catalysis by LPMOs requires the reduction of the active-site copper from Cu(II) to Cu(I) by a reducing agent and H(2)O(2) or O(2) as a cosubstrate. This chain is AA13 family lytic polysaccharide monooxygenase A, found in Pyricularia oryzae (strain 70-15 / ATCC MYA-4617 / FGSC 8958) (Rice blast fungus).